Here is a 363-residue protein sequence, read N- to C-terminus: Glutamate--cysteine ligase (363 aa).

This sequence belongs to the glutamate--cysteine ligase type 2 family. YbdK subfamily.

It carries out the reaction L-cysteine + L-glutamate + ATP = gamma-L-glutamyl-L-cysteine + ADP + phosphate + H(+). Catalyzes the synthesis of gamma-glutamylcysteine (gamma-GC), the main low-molecular-weight thiol compound instead of glutathione in halophilic archaea. This chain is Glutamate--cysteine ligase, found in Haloquadratum walsbyi (strain DSM 16790 / HBSQ001).